The primary structure comprises 144 residues: Ribosomal RNA large subunit methyltransferase H (144 aa).

Residues leucine 63, glycine 92, and 111–116 (LSPLTF) each bind S-adenosyl-L-methionine.

It belongs to the RNA methyltransferase RlmH family. In terms of assembly, homodimer.

The protein localises to the cytoplasm. It catalyses the reaction pseudouridine(1915) in 23S rRNA + S-adenosyl-L-methionine = N(3)-methylpseudouridine(1915) in 23S rRNA + S-adenosyl-L-homocysteine + H(+). Functionally, specifically methylates the pseudouridine at position 1915 (m3Psi1915) in 23S rRNA. The sequence is that of Ribosomal RNA large subunit methyltransferase H from Synechococcus sp. (strain CC9902).